A 242-amino-acid polypeptide reads, in one-letter code: Probable transcriptional regulatory protein Bphy_2064 (242 aa).

This sequence belongs to the TACO1 family.

The protein localises to the cytoplasm. The chain is Probable transcriptional regulatory protein Bphy_2064 from Paraburkholderia phymatum (strain DSM 17167 / CIP 108236 / LMG 21445 / STM815) (Burkholderia phymatum).